The following is a 72-amino-acid chain: Defensin-like protein 230 (72 aa).

The first 27 residues, 1 to 27, serve as a signal peptide directing secretion; the sequence is MEKKSLACLSFLLLVLFVAQEIVVSEA. Cystine bridges form between Cys30–Cys72, Cys41–Cys60, Cys45–Cys66, and Cys49–Cys68.

It belongs to the DEFL family.

It is found in the secreted. The chain is Defensin-like protein 230 (PI230) from Pisum sativum (Garden pea).